Here is a 123-residue protein sequence, read N- to C-terminus: Small ribosomal subunit protein uS12 (123 aa).

A disordered region spans residues 1–29; the sequence is MPTINQLIRKKRQSSASRKKSPALQKCPQ. Over residues 8 to 21 the composition is skewed to basic residues; that stretch reads IRKKRQSSASRKKS. Asp89 carries the 3-methylthioaspartic acid modification.

It belongs to the universal ribosomal protein uS12 family. As to quaternary structure, part of the 30S ribosomal subunit. Contacts proteins S8 and S17. May interact with IF1 in the 30S initiation complex.

Functionally, with S4 and S5 plays an important role in translational accuracy. Interacts with and stabilizes bases of the 16S rRNA that are involved in tRNA selection in the A site and with the mRNA backbone. Located at the interface of the 30S and 50S subunits, it traverses the body of the 30S subunit contacting proteins on the other side and probably holding the rRNA structure together. The combined cluster of proteins S8, S12 and S17 appears to hold together the shoulder and platform of the 30S subunit. The sequence is that of Small ribosomal subunit protein uS12 from Chlamydia abortus (strain DSM 27085 / S26/3) (Chlamydophila abortus).